We begin with the raw amino-acid sequence, 516 residues long: Endoglucanase 17 (516 aa).

An N-terminal signal peptide occupies residues 1-29 (MALLLVSSSSSYALRVTIFLSFFFFLCNG). Aspartate 105 serves as the catalytic Nucleophile. Catalysis depends on residues histidine 433, aspartate 484, and glutamate 493.

The protein belongs to the glycosyl hydrolase 9 (cellulase E) family.

The protein localises to the secreted. It carries out the reaction Endohydrolysis of (1-&gt;4)-beta-D-glucosidic linkages in cellulose, lichenin and cereal beta-D-glucans.. The protein is Endoglucanase 17 of Arabidopsis thaliana (Mouse-ear cress).